The primary structure comprises 111 residues: Cytochrome c (111 aa).

N-acetylalanine is present on alanine 1. Residues cysteine 22, cysteine 25, and histidine 26 each coordinate heme c. Position 80 is an N6,N6,N6-trimethyllysine (lysine 80). Methionine 88 contributes to the heme c binding site. Lysine 94 carries the N6,N6,N6-trimethyllysine modification.

This sequence belongs to the cytochrome c family. In terms of processing, binds 1 heme c group covalently per subunit.

It is found in the mitochondrion intermembrane space. Its function is as follows. Electron carrier protein. The oxidized form of the cytochrome c heme group can accept an electron from the heme group of the cytochrome c1 subunit of cytochrome reductase. Cytochrome c then transfers this electron to the cytochrome oxidase complex, the final protein carrier in the mitochondrial electron-transport chain. This chain is Cytochrome c, found in Sesamum indicum (Oriental sesame).